Consider the following 174-residue polypeptide: MKTLLLTIGFSLIAILQAQDTPALGKDTVAVSGKWYLKAMTADQEVPEKPDSVTPMILKAQKGGNLEAKITMLTNGQCQNITVVLHKTSEPGKYTAYEGQRVVFIQPSPVRDHYILYCEGELHGRQIRMAKLLGRDPEQSQEALEDFREFSRAKGLNQEILELAQSETCSPGGQ.

Positions 1–18 (MKTLLLTIGFSLIAILQA) are cleaved as a signal peptide. The cysteines at positions 78 and 169 are disulfide-linked. The N-linked (GlcNAc...) asparagine glycan is linked to Asn80.

It belongs to the calycin superfamily. Lipocalin family. Tongue epithelial tissue.

The protein localises to the secreted. This Canis lupus familiaris (Dog) protein is Major allergen Can f 1.